Here is a 391-residue protein sequence, read N- to C-terminus: Phosphoglycerate kinase (391 aa).

Residues 21–23, Arg-36, 59–62, Arg-113, and Arg-146 contribute to the substrate site; these read DLN and HLGR. Residues Lys-197, Glu-319, and 345-348 each bind ATP; that span reads GGDT.

Belongs to the phosphoglycerate kinase family. As to quaternary structure, monomer.

The protein localises to the cytoplasm. The catalysed reaction is (2R)-3-phosphoglycerate + ATP = (2R)-3-phospho-glyceroyl phosphate + ADP. It participates in carbohydrate degradation; glycolysis; pyruvate from D-glyceraldehyde 3-phosphate: step 2/5. The sequence is that of Phosphoglycerate kinase from Xylella fastidiosa (strain Temecula1 / ATCC 700964).